The following is a 152-amino-acid chain: Maintenance of carboxysome distribution protein B (152 aa).

In terms of assembly, self-associates, interacts with McdA probably via the C-terminus of both proteins. Homohexamerizes. Probably a trimer of dimers. Interacts with most of the shell components of the carboxysome (CcmK2, CcmK3, CcmK4, CcmL and CcmO, but not CcmP) via its C-terminus.

The protein resides in the carboxysome. Its function is as follows. McdA and McdB together mediate carboxysome (Cb) spacing, size, ultrastructure and probably inheritance in the cell. Together they prevent Cb aggregation. McdA is an ATPase that forms dynamic gradients on the nucleoid in response to adapter protein McdB, which associates with carboxysomes. The interplay between McdA gradients on the nucleoid and McdB-bound carboxysomes result in the equal spacing of Cbs along the cell length. McdB may have an additional function in cell divison. Stimulates the ATPase activity of McdA, causing McdA to be released from DNA. Overexpression leads to loss of McdA oscillation and formation of large Cb aggregates which colocalize with McdB, as well as diffuse McdB staining in the cytoplasm. Undergoes liquid-liquid phase separation between pH 6.5-7.5 and at concentrations between 1 uM and 167 uM. Forms polar foci upon overexpression in E.coli. Functionally, incorrect positioning (aggregation) of carboxysomes results in reduced CO(2) fixation by encapsulated RuBisCO, which leads to slower growth, cell elongation, asymmetric cell division and an increase in RuBisCO levels. The polypeptide is Maintenance of carboxysome distribution protein B (Synechococcus elongatus (strain ATCC 33912 / PCC 7942 / FACHB-805) (Anacystis nidulans R2)).